The sequence spans 90 residues: Small ribosomal subunit protein bS20 (90 aa).

Belongs to the bacterial ribosomal protein bS20 family.

Binds directly to 16S ribosomal RNA. The sequence is that of Small ribosomal subunit protein bS20 from Rickettsia akari (strain Hartford).